A 275-amino-acid chain; its full sequence is Light-independent protochlorophyllide reductase iron-sulfur ATP-binding protein (275 aa).

ATP is bound by residues 10-15 (GIGKST) and Lys39. Ser14 is a binding site for Mg(2+). [4Fe-4S] cluster is bound by residues Cys95 and Cys129. Position 180–181 (180–181 (NR)) interacts with ATP.

It belongs to the NifH/BchL/ChlL family. In terms of assembly, homodimer. Protochlorophyllide reductase is composed of three subunits; ChlL, ChlN and ChlB. [4Fe-4S] cluster is required as a cofactor.

It catalyses the reaction chlorophyllide a + oxidized 2[4Fe-4S]-[ferredoxin] + 2 ADP + 2 phosphate = protochlorophyllide a + reduced 2[4Fe-4S]-[ferredoxin] + 2 ATP + 2 H2O. Its pathway is porphyrin-containing compound metabolism; chlorophyll biosynthesis (light-independent). Its function is as follows. Component of the dark-operative protochlorophyllide reductase (DPOR) that uses Mg-ATP and reduced ferredoxin to reduce ring D of protochlorophyllide (Pchlide) to form chlorophyllide a (Chlide). This reaction is light-independent. The L component serves as a unique electron donor to the NB-component of the complex, and binds Mg-ATP. This Gloeobacter violaceus (strain ATCC 29082 / PCC 7421) protein is Light-independent protochlorophyllide reductase iron-sulfur ATP-binding protein.